The following is a 600-amino-acid chain: Xylulose kinase (600 aa).

79–82 contacts substrate; the sequence is WLEA. Ser-244 is subject to Phosphoserine. Asp-299 is a binding site for substrate. Residues Gly-358 and 505-509 each bind ATP; that span reads GASKN.

The protein belongs to the FGGY kinase family.

The protein resides in the cytoplasm. It carries out the reaction D-xylulose + ATP = D-xylulose 5-phosphate + ADP + H(+). Functionally, xylulose kinase necessary for growth in culture media with D-xylulose as the solecarbon source. The protein is Xylulose kinase of Saccharomyces cerevisiae (strain ATCC 204508 / S288c) (Baker's yeast).